Here is an 861-residue protein sequence, read N- to C-terminus: Replication factor C subunit 1 (861 aa).

Residues 1 to 103 (MVNISDFFGK…SSKSSDSASN (103 aa)) form a disordered region. Positions 16–28 (RSSTSRPTRQVGS) are enriched in polar residues. Threonine 38 carries the post-translational modification Phosphothreonine. Serine 40 is subject to Phosphoserine. A Phosphothreonine modification is found at threonine 63. Residues 153–243 (GKPNCLLGLT…PAEGGDGEAA (91 aa)) form the BRCT domain. ATP-binding positions include threonine 299, cysteine 311, 353 to 361 (GPPGIGKTT), and asparagine 456. The tract at residues 788–861 (STIGGGGVGT…GGSKKRKTKA (74 aa)) is disordered. The span at 803–823 (DFEDVVDADDNPVPADDEETQ) shows a compositional bias: acidic residues. 2 consecutive short sequence motifs (nuclear localization signal) follow at residues 830 to 834 (KKDKL) and 855 to 860 (KKRKTK). Basic residues predominate over residues 836–861 (KQKAKPTKRKTATSKPGGSKKRKTKA).

The protein belongs to the activator 1 large subunit family. Replication factor C (RFC) is a heteropentamer of subunits RFC1, RFC2, RFC3, RFC4 and RFC5 and forms a complex with POL30/PCNA in the presence of ATP. Interacts with ECO1 and POL30/PCNA.

The protein localises to the nucleus. Component of the ATP-dependent clamp loader RFC complex for the POL30/PCNA homotrimer DNA clamp. During a clamp loading circle, the RFC:clamp complex binds to DNA and the recognition of the double-stranded/single-stranded junction stimulates ATP hydrolysis by RFC. The complex presumably provides bipartite ATP sites in which one subunit supplies a catalytic site for hydrolysis of ATP bound to the neighboring subunit. Dissociation of RFC from the clamp leaves the clamp encircling DNA. Replication factor C (RFC or activator 1) complex acts during elongation of primed DNA templates by DNA polymerase delta and epsilon. RFC has an essential but redundant activity in sister chromatid cohesion establishment. The chain is Replication factor C subunit 1 (RFC1) from Saccharomyces cerevisiae (strain ATCC 204508 / S288c) (Baker's yeast).